Consider the following 276-residue polypeptide: UPF0276 protein Caul_0757 (276 aa).

Belongs to the UPF0276 family.

This chain is UPF0276 protein Caul_0757, found in Caulobacter sp. (strain K31).